Here is a 626-residue protein sequence, read N- to C-terminus: uncharacterized protein (626 aa).

This is an uncharacterized protein from Dictyostelium discoideum (Social amoeba).